The sequence spans 299 residues: Oxygen-dependent coproporphyrinogen-III oxidase (299 aa).

Substrate is bound at residue S92. 2 residues coordinate Mn(2+): H96 and H106. Catalysis depends on H106, which acts as the Proton donor. Residue 108–110 (NVR) coordinates substrate. Mn(2+) contacts are provided by H145 and H175. The tract at residues 240-275 (YVEFNLVWDRGTLFGLQTGGRTESILMSMPPLVRWE) is important for dimerization. 258–260 (GGR) is a substrate binding site.

This sequence belongs to the aerobic coproporphyrinogen-III oxidase family. In terms of assembly, homodimer. Mn(2+) serves as cofactor.

It is found in the cytoplasm. The enzyme catalyses coproporphyrinogen III + O2 + 2 H(+) = protoporphyrinogen IX + 2 CO2 + 2 H2O. Its pathway is porphyrin-containing compound metabolism; protoporphyrin-IX biosynthesis; protoporphyrinogen-IX from coproporphyrinogen-III (O2 route): step 1/1. Functionally, involved in the heme biosynthesis. Catalyzes the aerobic oxidative decarboxylation of propionate groups of rings A and B of coproporphyrinogen-III to yield the vinyl groups in protoporphyrinogen-IX. The sequence is that of Oxygen-dependent coproporphyrinogen-III oxidase from Escherichia coli O127:H6 (strain E2348/69 / EPEC).